We begin with the raw amino-acid sequence, 364 residues long: Protein-glutamate methylesterase/protein-glutamine glutaminase 3 (364 aa).

The 118-residue stretch at 7–124 (RVLIVDDSAS…THALLEASAR (118 aa)) folds into the Response regulatory domain. Residue D58 is modified to 4-aspartylphosphate. Residues 167–358 (PTTERLVCIG…REIMLWQDAK (192 aa)) enclose the CheB-type methylesterase domain. Residues S178, H204, and D300 contribute to the active site.

It belongs to the CheB family. Phosphorylated by CheA. Phosphorylation of the N-terminal regulatory domain activates the methylesterase activity.

It localises to the cytoplasm. It catalyses the reaction [protein]-L-glutamate 5-O-methyl ester + H2O = L-glutamyl-[protein] + methanol + H(+). The enzyme catalyses L-glutaminyl-[protein] + H2O = L-glutamyl-[protein] + NH4(+). Involved in chemotaxis. Part of a chemotaxis signal transduction system that modulates chemotaxis in response to various stimuli. Catalyzes the demethylation of specific methylglutamate residues introduced into the chemoreceptors (methyl-accepting chemotaxis proteins or MCP) by CheR. Also mediates the irreversible deamidation of specific glutamine residues to glutamic acid. In Rhodopseudomonas palustris (strain BisB18), this protein is Protein-glutamate methylesterase/protein-glutamine glutaminase 3.